Reading from the N-terminus, the 268-residue chain is Nickel import ATP-binding protein NikE (268 aa).

In terms of domain architecture, ABC transporter spans 4–252 (LNVSDLSHHY…SSDAGRVLQN (249 aa)). 45-52 (GRSGCGKS) is a binding site for ATP.

It belongs to the ABC transporter superfamily. Nickel importer (TC 3.A.1.5.3) family. As to quaternary structure, the complex is composed of two ATP-binding proteins (NikD and NikE), two transmembrane proteins (NikB and NikC) and a solute-binding protein (NikA).

It is found in the cell inner membrane. It carries out the reaction Ni(2+)(out) + ATP + H2O = Ni(2+)(in) + ADP + phosphate + H(+). Functionally, part of the ABC transporter complex NikABCDE involved in nickel import. Responsible for energy coupling to the transport system. The sequence is that of Nickel import ATP-binding protein NikE from Escherichia coli O6:K15:H31 (strain 536 / UPEC).